The primary structure comprises 378 residues: Putative zinc finger protein 302L (378 aa).

The C2H2-type; degenerate zinc finger occupies 3–25; that stretch reads IVCEFCDKSFDSKSKVNAHQRTK.

This sequence belongs to the IIV-6 302L family.

This chain is Putative zinc finger protein 302L, found in Invertebrate iridescent virus 6 (IIV-6).